The sequence spans 166 residues: Putative 4-hydroxy-4-methyl-2-oxoglutarate aldolase 2 (166 aa).

Residue alanine 2 is modified to N-acetylalanine. Residues glycine 81–proline 84 and arginine 103 contribute to the substrate site. Residue aspartate 104 coordinates a divalent metal cation.

This sequence belongs to the class II aldolase/RraA-like family. In terms of assembly, homotrimer. The cofactor is a divalent metal cation.

The catalysed reaction is 4-hydroxy-4-methyl-2-oxoglutarate = 2 pyruvate. It catalyses the reaction oxaloacetate + H(+) = pyruvate + CO2. Functionally, catalyzes the aldol cleavage of 4-hydroxy-4-methyl-2-oxoglutarate (HMG) into 2 molecules of pyruvate. Also contains a secondary oxaloacetate (OAA) decarboxylase activity due to the common pyruvate enolate transition state formed following C-C bond cleavage in the retro-aldol and decarboxylation reactions. The polypeptide is Putative 4-hydroxy-4-methyl-2-oxoglutarate aldolase 2 (Arabidopsis thaliana (Mouse-ear cress)).